A 133-amino-acid chain; its full sequence is MVFVNPLANALTSIYNNEMRRNKQAIIMPASKLVINVLRVMQKEGYVGEFEYIDDGRWGKITVQLLGRVNKCGPITPRYPLSYRQMIALPDYIRRYLPSKEIGIIIVSTSKGVMSHKEAARMRLGGVALGYVY.

It belongs to the universal ribosomal protein uS8 family. Part of the 30S ribosomal subunit.

Its function is as follows. One of the primary rRNA binding proteins, it binds directly to 16S rRNA central domain where it helps coordinate assembly of the platform of the 30S subunit. The chain is Small ribosomal subunit protein uS8 from Saccharolobus islandicus (strain L.S.2.15 / Lassen #1) (Sulfolobus islandicus).